The chain runs to 75 residues: Large ribosomal subunit protein uL29 (75 aa).

This sequence belongs to the universal ribosomal protein uL29 family.

The protein is Large ribosomal subunit protein uL29 of Nostoc punctiforme (strain ATCC 29133 / PCC 73102).